A 202-amino-acid polypeptide reads, in one-letter code: Glycerol-3-phosphate acyltransferase (202 aa).

Transmembrane regions (helical) follow at residues 2–22 (MIVI…GYVI), 54–74 (FLVT…PLWL), 88–108 (NGLI…YLGF), 120–140 (VILG…FGIL), 141–161 (YLTK…VIGA), and 162–182 (LLIR…LLII).

This sequence belongs to the PlsY family. In terms of assembly, probably interacts with PlsX.

It is found in the cell membrane. The catalysed reaction is an acyl phosphate + sn-glycerol 3-phosphate = a 1-acyl-sn-glycero-3-phosphate + phosphate. It participates in lipid metabolism; phospholipid metabolism. In terms of biological role, catalyzes the transfer of an acyl group from acyl-phosphate (acyl-PO(4)) to glycerol-3-phosphate (G3P) to form lysophosphatidic acid (LPA). This enzyme utilizes acyl-phosphate as fatty acyl donor, but not acyl-CoA or acyl-ACP. This is Glycerol-3-phosphate acyltransferase from Staphylococcus saprophyticus subsp. saprophyticus (strain ATCC 15305 / DSM 20229 / NCIMB 8711 / NCTC 7292 / S-41).